We begin with the raw amino-acid sequence, 692 residues long: Penicillin-binding protein activator LpoA (692 aa).

The N-terminal stretch at 1-26 is a signal peptide; the sequence is MLSSITVRTKSGRLIPLVLAATLLAA. C27 is lipidated: N-palmitoyl cysteine. C27 carries S-diacylglycerol cysteine lipidation. 2 disordered regions span residues 297 to 316 and 324 to 373; these read AAAATDNGAPASSGTLAAAT and VNAA…PDAH. The span at 332 to 363 shows a compositional bias: low complexity; the sequence is PSAQGTDAAAPAAPNDSAALPPLDAAGDPIAP.

This sequence belongs to the LpoA family. In terms of assembly, interacts with PBP1a.

The protein localises to the cell outer membrane. Functionally, regulator of peptidoglycan synthesis that is essential for the function of penicillin-binding protein 1A (PBP1a). This is Penicillin-binding protein activator LpoA from Edwardsiella piscicida.